The following is a 549-amino-acid chain: Cation/acetate symporter ActP (549 aa).

The next 13 membrane-spanning stretches (helical) occupy residues 33–53, 77–97, 103–123, 148–168, 183–203, 206–226, 262–282, 303–323, 355–375, 404–424, 428–448, 464–484, and 493–513; these read WQAI…TYWA, LAIA…ALVF, GLIY…LIAE, ILSA…QMVG, IAVV…GMLA, WVQI…AFMV, ISAL…PHIL, GFMG…IMLV, LFLG…VAGL, VSKI…VLFE, IAFM…PIIL, GGWL…TIWV, and IFPY…GIWF.

This sequence belongs to the sodium:solute symporter (SSF) (TC 2.A.21) family.

It localises to the cell inner membrane. Transports acetate. This chain is Cation/acetate symporter ActP, found in Citrobacter koseri (strain ATCC BAA-895 / CDC 4225-83 / SGSC4696).